Reading from the N-terminus, the 327-residue chain is Movement protein (327 aa).

The stretch at 297–327 (IASSSSTENELARVSQNIDLLKNKLKEICGE) forms a coiled coil.

It belongs to the caulimoviridae movement protein family. As to quaternary structure, homotrimer, through the coiled-coil domain. Interacts with VAP. May interact (via N-terminus) with host prenylated Rab acceptor protein 1D (PRA1D).

Its subcellular location is the host cell junction. It is found in the host plasmodesma. Transports viral genome to neighboring plant cells directly through plasmosdesmata, without any budding. The movement protein allows efficient cell to cell propagation, by bypassing the host cell wall barrier. Acts by forming tubules structures that increase the size exclusion limit (SEL) of plasmodesmata, thereby allowing viral ribonucleocapsids to spread directly to neighboring cells. The polypeptide is Movement protein (Cauliflower mosaic virus (strain D/H) (CaMV)).